The primary structure comprises 606 residues: 1-deoxy-D-xylulose-5-phosphate synthase (606 aa).

Thiamine diphosphate contacts are provided by residues histidine 63 and 104-106 (GHS). Aspartate 137 contacts Mg(2+). Residues 138–139 (GS), asparagine 166, tyrosine 273, and glutamate 354 each bind thiamine diphosphate. A Mg(2+)-binding site is contributed by asparagine 166.

Belongs to the transketolase family. DXPS subfamily. Homodimer. Mg(2+) is required as a cofactor. Thiamine diphosphate serves as cofactor.

The enzyme catalyses D-glyceraldehyde 3-phosphate + pyruvate + H(+) = 1-deoxy-D-xylulose 5-phosphate + CO2. It functions in the pathway metabolic intermediate biosynthesis; 1-deoxy-D-xylulose 5-phosphate biosynthesis; 1-deoxy-D-xylulose 5-phosphate from D-glyceraldehyde 3-phosphate and pyruvate: step 1/1. Functionally, catalyzes the acyloin condensation reaction between C atoms 2 and 3 of pyruvate and glyceraldehyde 3-phosphate to yield 1-deoxy-D-xylulose-5-phosphate (DXP). The protein is 1-deoxy-D-xylulose-5-phosphate synthase of Sulfurimonas denitrificans (strain ATCC 33889 / DSM 1251) (Thiomicrospira denitrificans (strain ATCC 33889 / DSM 1251)).